Reading from the N-terminus, the 401-residue chain is Coenzyme A biosynthesis bifunctional protein CoaBC (401 aa).

Residues 1–190 (MQTLAGKKIL…FQPKPLQDKS (190 aa)) are phosphopantothenoylcysteine decarboxylase. Catalysis depends on Cys-159, which acts as the Proton donor. A phosphopantothenate--cysteine ligase region spans residues 191–401 (ILITAGPTRE…LKQIQTLMGH (211 aa)). CTP contacts are provided by residues Asp-279, Lys-289, 307–310 (PDIV), Phe-326, Lys-340, and Lys-344.

The protein in the N-terminal section; belongs to the HFCD (homo-oligomeric flavin containing Cys decarboxylase) superfamily. It in the C-terminal section; belongs to the PPC synthetase family. It depends on Mg(2+) as a cofactor. FMN is required as a cofactor.

The enzyme catalyses N-[(R)-4-phosphopantothenoyl]-L-cysteine + H(+) = (R)-4'-phosphopantetheine + CO2. The catalysed reaction is (R)-4'-phosphopantothenate + L-cysteine + CTP = N-[(R)-4-phosphopantothenoyl]-L-cysteine + CMP + diphosphate + H(+). It functions in the pathway cofactor biosynthesis; coenzyme A biosynthesis; CoA from (R)-pantothenate: step 2/5. It participates in cofactor biosynthesis; coenzyme A biosynthesis; CoA from (R)-pantothenate: step 3/5. Catalyzes two sequential steps in the biosynthesis of coenzyme A. In the first step cysteine is conjugated to 4'-phosphopantothenate to form 4-phosphopantothenoylcysteine. In the second step the latter compound is decarboxylated to form 4'-phosphopantotheine. This Vibrio vulnificus (strain YJ016) protein is Coenzyme A biosynthesis bifunctional protein CoaBC.